The chain runs to 318 residues: Aspartate carbamoyltransferase catalytic subunit (318 aa).

The carbamoyl phosphate site is built by arginine 59 and threonine 60. Position 87 (lysine 87) interacts with L-aspartate. Carbamoyl phosphate-binding residues include arginine 109, histidine 137, and glutamine 140. L-aspartate-binding residues include arginine 170 and arginine 224. The carbamoyl phosphate site is built by glycine 265 and proline 266.

This sequence belongs to the aspartate/ornithine carbamoyltransferase superfamily. ATCase family. Heterododecamer (2C3:3R2) of six catalytic PyrB chains organized as two trimers (C3), and six regulatory PyrI chains organized as three dimers (R2).

The catalysed reaction is carbamoyl phosphate + L-aspartate = N-carbamoyl-L-aspartate + phosphate + H(+). The protein operates within pyrimidine metabolism; UMP biosynthesis via de novo pathway; (S)-dihydroorotate from bicarbonate: step 2/3. In terms of biological role, catalyzes the condensation of carbamoyl phosphate and aspartate to form carbamoyl aspartate and inorganic phosphate, the committed step in the de novo pyrimidine nucleotide biosynthesis pathway. The chain is Aspartate carbamoyltransferase catalytic subunit from Rhizobium etli (strain CIAT 652).